The sequence spans 159 residues: Pathogenesis-related leaf protein 4 (159 aa).

Residues 1-24 (MGLFNISLLLTCLMVLAIFHSCEA) form the signal peptide. Residue Gln-25 is modified to Pyrrolidone carboxylic acid. The SCP domain occupies 32 to 147 (LAVHNDARAQ…NGWWFISCNY (116 aa)). Disulfide bonds link Cys-68–Cys-136, Cys-109–Cys-115, and Cys-131–Cys-145.

The protein belongs to the CRISP family.

Probably involved in the defense reaction of plants against pathogens. The chain is Pathogenesis-related leaf protein 4 from Solanum lycopersicum (Tomato).